A 351-amino-acid polypeptide reads, in one-letter code: Transaldolase (351 aa).

Residue Lys-138 is the Schiff-base intermediate with substrate of the active site.

This sequence belongs to the transaldolase family. Type 2 subfamily.

Its subcellular location is the cytoplasm. It catalyses the reaction D-sedoheptulose 7-phosphate + D-glyceraldehyde 3-phosphate = D-erythrose 4-phosphate + beta-D-fructose 6-phosphate. Its pathway is carbohydrate degradation; pentose phosphate pathway; D-glyceraldehyde 3-phosphate and beta-D-fructose 6-phosphate from D-ribose 5-phosphate and D-xylulose 5-phosphate (non-oxidative stage): step 2/3. Functionally, transaldolase is important for the balance of metabolites in the pentose-phosphate pathway. This is Transaldolase from Neisseria meningitidis serogroup C (strain 053442).